Reading from the N-terminus, the 492-residue chain is Transmembrane protein 39B (492 aa).

Residues 1 to 54 (MGGRRGPNRTSYCRNPLCEPGSSGGSSGSHTSSASVTSVRSRTRSSSGTGLSSP) are disordered. Asn-8 is a glycosylation site (N-linked (GlcNAc...) asparagine). Low complexity predominate over residues 28–53 (GSHTSSASVTSVRSRTRSSSGTGLSS). A run of 8 helical transmembrane segments spans residues 77 to 97 (SILF…VHYI), 115 to 135 (TSLN…IVLG), 153 to 175 (SLFR…GWSL), 185 to 205 (TYSF…IPFL), 288 to 308 (EVLV…VWFV), 322 to 342 (LFLL…LPAS), 421 to 441 (ILNI…YSLM), and 447 to 467 (HQTI…FKLL).

It belongs to the TMEM39 family.

It is found in the endoplasmic reticulum membrane. In terms of biological role, may protect the cells against DNA damage caused by exposure to the cold-warming stress and facilitates tissue damage repair during the recovery phase. This chain is Transmembrane protein 39B, found in Homo sapiens (Human).